The primary structure comprises 751 residues: WD repeat-containing protein 91 (751 aa).

Residues glutamine 183–glutamate 205 adopt a coiled-coil conformation. The disordered stretch occupies residues glutamate 237–glutamine 398. Over residues leucine 238–alanine 267 the composition is skewed to polar residues. Basic and acidic residues predominate over residues threonine 356–threonine 373. 7 WD repeats span residues glutamate 410–alanine 449, isoleucine 452–glutamate 492, serine 517–glutamine 559, proline 564–serine 603, alanine 606–serine 645, valine 668–glutamate 706, and glycine 713–serine 751.

This sequence belongs to the WD repeat WDR91 family.

It localises to the early endosome membrane. It is found in the late endosome membrane. In terms of biological role, functions as a negative regulator of the PI3 kinase/PI3K activity associated with endosomal membranes. By modifying the phosphatidylinositol 3-phosphate/PtdInsP3 content of endosomal membranes may regulate endosome fusion, recycling, sorting and early to late endosome transport. The sequence is that of WD repeat-containing protein 91 from Xenopus tropicalis (Western clawed frog).